A 281-amino-acid polypeptide reads, in one-letter code: Auxin-responsive protein IAA19 (281 aa).

An EAR-like (transcriptional repression) motif is present at residues 40-44 (LRLGL). The tract at residues 66–126 (LGPAPPPRGG…AAGAPRAAKA (61 aa)) is disordered. Positions 79–91 (GFVDSLDRSEGRR) are enriched in basic and acidic residues. Residues 114 to 126 (GEAAAGAPRAAKA) are compositionally biased toward low complexity. The PB1 domain maps to 161-265 (CCYVKVSMDG…RKLRIMRGSD (105 aa)).

This sequence belongs to the Aux/IAA family. As to quaternary structure, homodimers and heterodimers. In terms of tissue distribution, expressed in etiolated seedlings and flowers.

The protein resides in the nucleus. Functionally, aux/IAA proteins are short-lived transcriptional factors that function as repressors of early auxin response genes at low auxin concentrations. In Oryza sativa subsp. japonica (Rice), this protein is Auxin-responsive protein IAA19 (IAA19).